The chain runs to 200 residues: LHFPL tetraspan subfamily member 7 protein (200 aa).

4 consecutive transmembrane segments (helical) span residues 5-27 (VWVA…PAWF), 68-88 (VSAV…IFLL), 113-133 (AATA…SPFI), and 150-170 (LGWG…LPII).

The protein belongs to the TMEM211 family.

The protein localises to the membrane. This is LHFPL tetraspan subfamily member 7 protein from Homo sapiens (Human).